Reading from the N-terminus, the 265-residue chain is 4-hydroxy-tetrahydrodipicolinate reductase (265 aa).

16-21 serves as a coordination point for NAD(+); sequence GANGKM. NADP(+) is bound at residue arginine 43. NAD(+) contacts are provided by residues 106–108 and 130–133; these read GTT and SENF. Histidine 164 serves as the catalytic Proton donor/acceptor. Residue histidine 165 coordinates (S)-2,3,4,5-tetrahydrodipicolinate. The active-site Proton donor is the lysine 168. A (S)-2,3,4,5-tetrahydrodipicolinate-binding site is contributed by 174–175; that stretch reads AT.

Belongs to the DapB family. In terms of assembly, homotetramer.

Its subcellular location is the cytoplasm. It catalyses the reaction (S)-2,3,4,5-tetrahydrodipicolinate + NAD(+) + H2O = (2S,4S)-4-hydroxy-2,3,4,5-tetrahydrodipicolinate + NADH + H(+). The enzyme catalyses (S)-2,3,4,5-tetrahydrodipicolinate + NADP(+) + H2O = (2S,4S)-4-hydroxy-2,3,4,5-tetrahydrodipicolinate + NADPH + H(+). It functions in the pathway amino-acid biosynthesis; L-lysine biosynthesis via DAP pathway; (S)-tetrahydrodipicolinate from L-aspartate: step 4/4. In terms of biological role, catalyzes the conversion of 4-hydroxy-tetrahydrodipicolinate (HTPA) to tetrahydrodipicolinate. The sequence is that of 4-hydroxy-tetrahydrodipicolinate reductase from Wigglesworthia glossinidia brevipalpis.